A 175-amino-acid chain; its full sequence is Adenine phosphoribosyltransferase (175 aa).

The protein belongs to the purine/pyrimidine phosphoribosyltransferase family. As to quaternary structure, homodimer.

The protein resides in the cytoplasm. The enzyme catalyses AMP + diphosphate = 5-phospho-alpha-D-ribose 1-diphosphate + adenine. The protein operates within purine metabolism; AMP biosynthesis via salvage pathway; AMP from adenine: step 1/1. Its function is as follows. Catalyzes a salvage reaction resulting in the formation of AMP, that is energically less costly than de novo synthesis. This is Adenine phosphoribosyltransferase from Pelagibacter ubique (strain HTCC1062).